A 328-amino-acid polypeptide reads, in one-letter code: MIKKRVFSGIQPTGNIHLGNYLGAVKNWVDSQDEFDNIFCIVNSHAITIKQDPALLRAKTYELAAVLLACGIDMKKSKLFIQSEVDEHAALAWILDCNIPMGDMSRMTQFKDKSQKNPKNINIGLFNYPALMAADILLYQTDFVPVGEDQKQHLELTRDVAERFNRDYGETFKIPEPMIPKMGARIMGLDDPTKKMSKSEGKPNHGIALLDTPDEILKKFKKATTDSENLVRFNPEQIGIFNLLTIYQIFTGYSQEVIEAEFEGKGYGIFKVAVAEAVIEGLKPIQERYAKLTKEQGYLEEVLSHGASEVRKIAQKTYKEVKERVGLI.

Residues 11-13 (QPT) and 19-20 (GN) contribute to the ATP site. Residues 12–20 (PTGNIHLGN) carry the 'HIGH' region motif. Asp135 lines the L-tryptophan pocket. ATP-binding positions include 147–149 (GED), Ile186, and 195–199 (KMSKS). Residues 195–199 (KMSKS) carry the 'KMSKS' region motif.

This sequence belongs to the class-I aminoacyl-tRNA synthetase family. Homodimer.

It is found in the cytoplasm. It catalyses the reaction tRNA(Trp) + L-tryptophan + ATP = L-tryptophyl-tRNA(Trp) + AMP + diphosphate + H(+). Its function is as follows. Catalyzes the attachment of tryptophan to tRNA(Trp). The protein is Tryptophan--tRNA ligase of Wolinella succinogenes (strain ATCC 29543 / DSM 1740 / CCUG 13145 / JCM 31913 / LMG 7466 / NCTC 11488 / FDC 602W) (Vibrio succinogenes).